A 255-amino-acid chain; its full sequence is 3-hydroxyacyl-CoA dehydrogenase type-2 (255 aa).

Ser-14, Leu-16, Asp-35, Asp-58, Val-59, and Cys-85 together coordinate NAD(+). Ser-149 serves as a coordination point for substrate. Positions 162, 166, 195, and 197 each coordinate NAD(+). Tyr-162 acts as the Proton acceptor in catalysis.

Belongs to the short-chain dehydrogenases/reductases (SDR) family. As to quaternary structure, component of mitochondrial ribonuclease P, a complex composed of rswl/MRPP1, scu/MRPP2 and mldr/MRPP3. Found in many tissues including CNS, imaginal disks and salivary glands. Highest expression in both embryonic gonadal primordia and mature ovaries and testes.

Its subcellular location is the mitochondrion. The enzyme catalyses a (3S)-3-hydroxyacyl-CoA + NAD(+) = a 3-oxoacyl-CoA + NADH + H(+). The catalysed reaction is (3S)-3-hydroxybutanoyl-CoA + NAD(+) = acetoacetyl-CoA + NADH + H(+). It catalyses the reaction testosterone + NAD(+) = androst-4-ene-3,17-dione + NADH + H(+). It carries out the reaction 5alpha-androstane-3alpha,17beta-diol + NAD(+) = 17beta-hydroxy-5alpha-androstan-3-one + NADH + H(+). The enzyme catalyses 17beta-estradiol + NAD(+) = estrone + NADH + H(+). The catalysed reaction is ursodeoxycholate + NAD(+) = 7-oxolithocholate + NADH + H(+). It catalyses the reaction 3beta,7beta-dihydroxy-5beta-cholan-24-oate + NAD(+) = 3beta-hydroxy-7-oxo-5beta-cholan-24-oate + NADH + H(+). It carries out the reaction 11-dehydrocorticosterone + NAD(+) = pregn-4-ene-3,11,20,21-tetraone + NADH + H(+). The enzyme catalyses cortisone + NAD(+) = 17alpha-hydroxypregn-4-en-3,11,20-trione-21-al + NADH + H(+). The catalysed reaction is cortisol + NAD(+) = 11beta,17alpha-dihydroxypregn-4-ene-3,20,21-trione + NADH + H(+). It catalyses the reaction 5alpha-pregnan-20beta-ol-3-one + NAD(+) = 5alpha-pregnane-3,20-dione + NADH + H(+). It carries out the reaction 17beta-hydroxy-5alpha-androstan-3-one + NAD(+) = 5alpha-androstan-3,17-dione + NADH + H(+). Functionally, mitochondrial dehydrogenase involved in pathways of fatty acid, and steroid metabolism. Versatile enzyme presenting two types of activity; L-3-hydroxyacyl-CoA dehydrogenase ((3S)-3-hydroxyacyl-CoA dehydrogenase) activity and hydroxysteroid dehydrogenase (HSD) activity with a wide substrate spectrum. As a (3S)-3-hydroxyacyl-CoA dehydrogenase, it functions in the third step of the fatty acid beta-oxidation pathway, a major metabolic process in which fatty acids are oxidized to provide a significant source of energy, while also generating acyl-CoA metabolites used by many metabolic routes. As a HSD, it functions in the degradation pathways of glucocorticoids and sex steroids and epimerization of bile acids; catalyzes the beta-oxidation at position 17 of androgens and estrogens, has 3-alpha-hydroxysteroid dehydrogenase activity with androsterone, and carries out oxidative conversions of 7-beta-hydroxylated bile acids like ursodeoxycholate or isoursodeoxycholate (also known as 3-beta,7-beta-dihydroxy-5-beta-cholan-24-oate or 7-beta-hydroxyisolithocholate, respectively). Also exhibits 20-beta-OH and 21-OH dehydrogenase activities with C21 steroids. Essential for structural and functional integrity of mitochondria. Required for cell survival during embryonic development. May play a role in germline formation. In terms of biological role, in addition to mitochondrial dehydrogenase activity, moonlights as a component of mitochondrial ribonuclease P, a complex that cleaves tRNA molecules in their 5'-ends. Essential for the structural and functional integrity of mitochondria. Function is essential for pupal development. The sequence is that of 3-hydroxyacyl-CoA dehydrogenase type-2 from Drosophila melanogaster (Fruit fly).